The primary structure comprises 605 residues: Elongation factor 4 (605 aa).

Residues 9-192 (SRIRNFCIIA…AIIARVPAPA (184 aa)) enclose the tr-type G domain. GTP is bound by residues 21 to 26 (DHGKST) and 139 to 142 (NKID).

This sequence belongs to the TRAFAC class translation factor GTPase superfamily. Classic translation factor GTPase family. LepA subfamily.

It is found in the cell inner membrane. The enzyme catalyses GTP + H2O = GDP + phosphate + H(+). In terms of biological role, required for accurate and efficient protein synthesis under certain stress conditions. May act as a fidelity factor of the translation reaction, by catalyzing a one-codon backward translocation of tRNAs on improperly translocated ribosomes. Back-translocation proceeds from a post-translocation (POST) complex to a pre-translocation (PRE) complex, thus giving elongation factor G a second chance to translocate the tRNAs correctly. Binds to ribosomes in a GTP-dependent manner. This chain is Elongation factor 4, found in Chlorobium luteolum (strain DSM 273 / BCRC 81028 / 2530) (Pelodictyon luteolum).